Here is a 293-residue protein sequence, read N- to C-terminus: Aminodeoxychorismate lyase (293 aa).

K146 is modified (N6-(pyridoxal phosphate)lysine).

This sequence belongs to the class-IV pyridoxal-phosphate-dependent aminotransferase family. In terms of assembly, homodimer. Pyridoxal 5'-phosphate serves as cofactor.

It catalyses the reaction 4-amino-4-deoxychorismate = 4-aminobenzoate + pyruvate + H(+). It participates in cofactor biosynthesis; tetrahydrofolate biosynthesis; 4-aminobenzoate from chorismate: step 2/2. Involved in the biosynthesis of p-aminobenzoate (PABA), a precursor of tetrahydrofolate. Converts 4-amino-4-deoxychorismate into 4-aminobenzoate (PABA) and pyruvate. This chain is Aminodeoxychorismate lyase, found in Bacillus subtilis (strain 168).